The chain runs to 118 residues: Disulfide bond formation protein (118 aa).

Positions 1–27 (MRAKWLWMTAVGSLLITVLTAWGWAAA) are cleaved as a signal peptide. The 87-residue stretch at 28-114 (SSQDSKIVYV…VAEAVLRSFF (87 aa)) folds into the Thioredoxin domain. Cysteine 42 and cysteine 45 are joined by a disulfide.

It belongs to the thioredoxin family.

Its subcellular location is the secreted. Functionally, stimulates the oxidation and reduction of disulfide bonds in vitro. The sequence is that of Disulfide bond formation protein (bdb) from Brevibacillus choshinensis.